The primary structure comprises 426 residues: 3-phosphoshikimate 1-carboxyvinyltransferase (426 aa).

The 3-phosphoshikimate site is built by Lys22, Ser23, and Arg27. Lys22 contributes to the phosphoenolpyruvate binding site. Positions 96 and 124 each coordinate phosphoenolpyruvate. Ser170, Ser171, Gln172, Ser198, Asp314, Asn337, and Lys341 together coordinate 3-phosphoshikimate. Gln172 is a binding site for phosphoenolpyruvate. The active-site Proton acceptor is the Asp314. Phosphoenolpyruvate is bound by residues Arg345, Arg387, and Lys412.

It belongs to the EPSP synthase family. In terms of assembly, monomer.

It is found in the cytoplasm. It carries out the reaction 3-phosphoshikimate + phosphoenolpyruvate = 5-O-(1-carboxyvinyl)-3-phosphoshikimate + phosphate. It functions in the pathway metabolic intermediate biosynthesis; chorismate biosynthesis; chorismate from D-erythrose 4-phosphate and phosphoenolpyruvate: step 6/7. Catalyzes the transfer of the enolpyruvyl moiety of phosphoenolpyruvate (PEP) to the 5-hydroxyl of shikimate-3-phosphate (S3P) to produce enolpyruvyl shikimate-3-phosphate and inorganic phosphate. The chain is 3-phosphoshikimate 1-carboxyvinyltransferase from Shewanella oneidensis (strain ATCC 700550 / JCM 31522 / CIP 106686 / LMG 19005 / NCIMB 14063 / MR-1).